The chain runs to 96 residues: Large ribosomal subunit protein eL14 (96 aa).

This sequence belongs to the eukaryotic ribosomal protein eL14 family.

The chain is Large ribosomal subunit protein eL14 from Sulfolobus acidocaldarius (strain ATCC 33909 / DSM 639 / JCM 8929 / NBRC 15157 / NCIMB 11770).